We begin with the raw amino-acid sequence, 145 residues long: UPF0735 ACT domain-containing protein CLH_2637 (145 aa).

The ACT domain occupies 69–144; that stretch reads TFNLIVKDQT…YVEKIEFVAM (76 aa).

Belongs to the UPF0735 family.

This is UPF0735 ACT domain-containing protein CLH_2637 from Clostridium botulinum (strain Alaska E43 / Type E3).